A 54-amino-acid chain; its full sequence is Lectin alpha-1 chain (54 aa).

This sequence belongs to the leguminous lectin family. As to quaternary structure, tetramer of two alpha and two beta chains.

This is Lectin alpha-1 chain from Lathyrus cicera (Flat-pod pea).